Reading from the N-terminus, the 149-residue chain is FAD synthase (149 aa).

ATP contacts are provided by residues 10 to 11, 15 to 18, Asp-95, and Tyr-123; these read TF and HPGH.

Belongs to the archaeal FAD synthase family. As to quaternary structure, homodimer. The cofactor is Co(2+).

The enzyme catalyses FMN + ATP + H(+) = FAD + diphosphate. The protein operates within cofactor biosynthesis; FAD biosynthesis; FAD from FMN: step 1/1. With respect to regulation, is inhibited by the product PPi. In terms of biological role, catalyzes the transfer of the AMP portion of ATP to flavin mononucleotide (FMN) to produce flavin adenine dinucleotide (FAD) coenzyme. To a lesser extent, is also able to utilize other nucleotides such as CTP and GTP as substrates, producing the modified coenzymes, flavin cytosine dinucleotide (FCD) and flavin guanine dinucleotide (FGD), respectively. Does not catalyze the reverse reaction to produce FMN and ATP from FAD and PPi. Does not function as a glycerol-3-phosphate cytidylyltransferase, as previously annotated in the complete genome. This is FAD synthase (ribL) from Methanocaldococcus jannaschii (strain ATCC 43067 / DSM 2661 / JAL-1 / JCM 10045 / NBRC 100440) (Methanococcus jannaschii).